Here is a 445-residue protein sequence, read N- to C-terminus: Nuclear envelope integral membrane protein 1 (445 aa).

The N-terminal stretch at 1 to 44 is a signal peptide; it reads MAGGMKVAVLPAVGAGPWSWGAGGCGAVRLLLVLFGCFVCGSAG. Asn125 carries N-linked (GlcNAc...) asparagine glycosylation. The next 5 membrane-spanning stretches (helical) occupy residues 161-181, 186-206, 216-236, 245-265, and 289-309; these read PKLF…DLLS, FYYS…IIFI, PIYI…QLVF, CYWQ…FAVC, and LCFM…VVIA. An a; required for its colocalization with lamins at the nuclear envelope region spans residues 186-297; the sequence is FYYSTGMSVG…GLCFMYSSIQ (112 aa). The interval 336–405 is b; required for interaction with RAN-GTP; the sequence is TVPPRLLTEE…LTPNEVSVHE (70 aa). Positions 336 to 445 are required for nuclear localization; sequence TVPPRLLTEE…LVVQQNSFLT (110 aa). Phosphoserine occurs at positions 368, 424, and 425. Residues 418–430 are compositionally biased toward acidic residues; sequence ELSEETSSEEEDS. Residues 418–445 form a disordered region; that stretch reads ELSEETSSEEEDSDSRYPLVVQQNSFLT.

Belongs to the NEMP family. In terms of assembly, homooligomer. Interacts with RAN-GTP. Interacts with EMD. Post-translationally, phosphorylation may regulate its interaction with RAN-GTP.

The protein resides in the nucleus inner membrane. It localises to the nucleus envelope. Functionally, together with EMD, contributes to nuclear envelope stiffness in germ cells. Required for female fertility. Essential for normal erythropoiesis. Required for efficient nuclear envelope opening and enucleation during the late stages of erythroblast maturation. This chain is Nuclear envelope integral membrane protein 1 (NEMP1), found in Bos taurus (Bovine).